Consider the following 214-residue polypeptide: Refilin-B (214 aa).

The disordered stretch occupies residues 1-56; sequence MVGRLSLQDVPELVDAKKKGDGVLDSPDSGLPPSPSPSHWGLAAGGGGGERAAAPG. Phosphoserine occurs at positions 6 and 26.

It belongs to the Refilin family. In terms of assembly, interacts with FLNA and FLNB.

The protein resides in the cytoplasm. It localises to the cytoskeleton. In terms of biological role, involved in the regulation of the perinuclear actin network and nuclear shape through interaction with filamins. Plays an essential role in the formation of cartilaginous skeletal elements. The sequence is that of Refilin-B from Homo sapiens (Human).